The chain runs to 58 residues: Large ribosomal subunit protein uL30 (58 aa).

It belongs to the universal ribosomal protein uL30 family. In terms of assembly, part of the 50S ribosomal subunit.

This is Large ribosomal subunit protein uL30 from Acinetobacter baylyi (strain ATCC 33305 / BD413 / ADP1).